Reading from the N-terminus, the 430-residue chain is SH3 domain-containing protein PJ696.02 (430 aa).

The segment at 237–372 is disordered; it reads EPEDIWGPSS…KPKFKQDSLG (136 aa). Positions 263–277 are enriched in basic and acidic residues; that stretch reads RRGDSYRSNRSRAHD. At Ser285 the chain carries Phosphoserine. Positions 304-313 are enriched in basic and acidic residues; that stretch reads SKMDNRRSKY. At Thr316 the chain carries Phosphothreonine. Residues Ser318 and Ser324 each carry the phosphoserine modification. Tyr325 carries the phosphotyrosine modification. Phosphoserine occurs at positions 326, 354, and 406. A compositionally biased stretch (low complexity) spans 333 to 358; the sequence is VYSSDVSTESSSQFSSRSSEYSKPSR. Positions 371-430 constitute an SH3 domain; sequence LGPNQARAMYSFAGEQPGDLSFQKGDIIDIVERSGSHDDWWTGRIGYREGIFPANYVKLS.

It belongs to the SH3YL1 family.

The polypeptide is SH3 domain-containing protein PJ696.02 (Schizosaccharomyces pombe (strain 972 / ATCC 24843) (Fission yeast)).